We begin with the raw amino-acid sequence, 834 residues long: Copper-exporting P-type ATPase (834 aa).

Residues 2–186 (SQTIDLTLDG…TAVATMKRFR (185 aa)) are Cytoplasmic-facing. HMA domains are found at residues 3 to 64 (QTID…YDAS) and 99 to 162 (DSQQ…YGAE). Cysteine 14, cysteine 17, cysteine 110, and cysteine 113 together coordinate Cu(+). Short sequence motifs (CXXC motif) lie at residues 14–17 (CGHC) and 110–113 (CASC). The helical transmembrane segment at 187–207 (WQAIVALAVGIPVMVWGMIGD) threads the bilayer. Over 208 to 217 (NMMVTADNRS) the chain is Periplasmic; loop 1. The chain crosses the membrane as a helical span at residues 218-238 (LWLVIGLITLAVMVFAGGHFY). The Cytoplasmic segment spans residues 239 to 253 (RSAWKSLLNGAATMD). A helical membrane pass occupies residues 254–274 (TLVALGTGVAWLYSMSVNLWP). The Periplasmic; loop 2 portion of the chain corresponds to 275 to 283 (QWFPMEARH). A helical transmembrane segment spans residues 284-304 (LYYEASAMIIGLINLGHMLEA). Over 305-437 (RARQRSSKAL…EIGQLADKIS (133 aa)) the chain is Cytoplasmic. The helical transmembrane segment at 438 to 458 (AVFVPVVVVIALVSAAIWYFF) threads the bilayer. Residues 459-463 (GPAPQ) lie on the Periplasmic; loop 3 side of the membrane. A helical transmembrane segment spans residues 464-484 (IVYTLVIATTVLIIACPCALG). Over 485–778 (LATPMSIISG…ATLHNMKQNL (294 aa)) the chain is Cytoplasmic. The 4-aspartylphosphate intermediate role is filled by aspartate 523. Aspartate 720 and aspartate 724 together coordinate Mg(2+). Residues 779–799 (LGAFIYNSIGIPVAAGILWPF) traverse the membrane as a helical segment. Residue threonine 800 is a topological domain, periplasmic; loop 4. The chain crosses the membrane as a helical span at residues 801-821 (GTLLNPVVAGAAMALSSITVV). The Cytoplasmic segment spans residues 822-834 (SNANRLLRFKPKE).

The protein belongs to the cation transport ATPase (P-type) (TC 3.A.3) family. Type IB subfamily. In terms of assembly, copper-exporting P-type ATPase interacts with apo-periplasmic copper chaperone CusF; when CusF is precharged with copper it binds very little CopA. The periplasmic loops of CopA, especially the first half of loop 1, play a large role in binding to CusF.

It is found in the cell inner membrane. It localises to the cytoplasm. It catalyses the reaction Cu(+)(in) + ATP + H2O = Cu(+)(out) + ADP + phosphate + H(+). Export is inhibited by vanadate. Phosphorylation is inhibited by vanadate and sensitive to KOH and hydroxylamine; it is not inhibited by azide. Phosphorylation is Cu(+) not Cu(2+)-dependent. ATPase activity is inhibited by bathocuproindisulfonate (BCDS), which chelates Cu(+) but not Cu(2+), and stimulated 3-4-fold by Cu(+). ATPase activity is inhibited by Cu(2+) plus DTT or Ag(+). Its function is as follows. Exports Cu(+) from the cytoplasm to the periplasm. Binds 2 Cu(+) ions per monomer, which are transferred to periplasmic copper chaperone CusF upon ATP hydrolysis. In vitro an excess of CusF over CopA is required for efficient transfer. May also be involved in silver export. In terms of biological role, mRNA is subject to programmed ribosomal frameshifting which produces a cytoplasmic copper chaperone CopA(Z) that corresponds to the first HMA domain. The soluble form is essential for cell survivial in the presence of CuSO(4); in growth competition experiments between wild-type and a version that prevents expression of CopA(Z) after 50 generations the non-CopA(Z) version is nearly extinct. The first HMA domain (residues 1-70) can be replaced by B.subtilis Cu chaperone CopZ. In Escherichia coli (strain K12), this protein is Copper-exporting P-type ATPase.